A 232-amino-acid chain; its full sequence is Orotidine 5'-phosphate decarboxylase (232 aa).

Residues Asp-13, Lys-35, 62 to 71 (DLKFHDIPNT), Thr-122, Arg-182, Gln-191, Gly-211, and Arg-212 each bind substrate. The Proton donor role is filled by Lys-64.

It belongs to the OMP decarboxylase family. Type 1 subfamily. In terms of assembly, homodimer.

The enzyme catalyses orotidine 5'-phosphate + H(+) = UMP + CO2. It participates in pyrimidine metabolism; UMP biosynthesis via de novo pathway; UMP from orotate: step 2/2. Functionally, catalyzes the decarboxylation of orotidine 5'-monophosphate (OMP) to uridine 5'-monophosphate (UMP). The sequence is that of Orotidine 5'-phosphate decarboxylase from Pseudomonas savastanoi pv. phaseolicola (strain 1448A / Race 6) (Pseudomonas syringae pv. phaseolicola (strain 1448A / Race 6)).